Here is a 455-residue protein sequence, read N- to C-terminus: tRNA modification GTPase MnmE (455 aa).

Residues R24, E81, and K120 each contribute to the (6S)-5-formyl-5,6,7,8-tetrahydrofolate site. The TrmE-type G domain maps to 216–378 (GMTVVIAGRP…LREHLKHCMG (163 aa)). K(+) is bound at residue N226. Residues 226 to 231 (NAGKSS), 245 to 251 (TDIAGTT), 270 to 273 (DTAG), and 335 to 338 (NKAD) each bind GTP. Residue S230 coordinates Mg(2+). 3 residues coordinate K(+): T245, I247, and T250. T251 serves as a coordination point for Mg(2+). K455 contributes to the (6S)-5-formyl-5,6,7,8-tetrahydrofolate binding site.

The protein belongs to the TRAFAC class TrmE-Era-EngA-EngB-Septin-like GTPase superfamily. TrmE GTPase family. In terms of assembly, homodimer. Heterotetramer of two MnmE and two MnmG subunits. K(+) is required as a cofactor.

It is found in the cytoplasm. In terms of biological role, exhibits a very high intrinsic GTPase hydrolysis rate. Involved in the addition of a carboxymethylaminomethyl (cmnm) group at the wobble position (U34) of certain tRNAs, forming tRNA-cmnm(5)s(2)U34. The sequence is that of tRNA modification GTPase MnmE from Stutzerimonas stutzeri (strain A1501) (Pseudomonas stutzeri).